The primary structure comprises 253 residues: 3-deoxy-manno-octulosonate cytidylyltransferase (253 aa).

Belongs to the KdsB family.

It localises to the cytoplasm. The catalysed reaction is 3-deoxy-alpha-D-manno-oct-2-ulosonate + CTP = CMP-3-deoxy-beta-D-manno-octulosonate + diphosphate. It functions in the pathway nucleotide-sugar biosynthesis; CMP-3-deoxy-D-manno-octulosonate biosynthesis; CMP-3-deoxy-D-manno-octulosonate from 3-deoxy-D-manno-octulosonate and CTP: step 1/1. Its pathway is bacterial outer membrane biogenesis; lipopolysaccharide biosynthesis. Functionally, activates KDO (a required 8-carbon sugar) for incorporation into bacterial lipopolysaccharide in Gram-negative bacteria. In Edwardsiella ictaluri (strain 93-146), this protein is 3-deoxy-manno-octulosonate cytidylyltransferase.